We begin with the raw amino-acid sequence, 113 residues long: Retrotransposon Gag-like protein 8C (113 aa).

It belongs to the FAM127 family.

This is Retrotransposon Gag-like protein 8C from Homo sapiens (Human).